A 330-amino-acid polypeptide reads, in one-letter code: Ferrochelatase (330 aa).

Residues histidine 200 and glutamate 281 each coordinate Fe cation.

This sequence belongs to the ferrochelatase family.

It localises to the cytoplasm. The enzyme catalyses heme b + 2 H(+) = protoporphyrin IX + Fe(2+). Its pathway is porphyrin-containing compound metabolism; protoheme biosynthesis; protoheme from protoporphyrin-IX: step 1/1. In terms of biological role, catalyzes the ferrous insertion into protoporphyrin IX. This is Ferrochelatase from Marinomonas sp. (strain MWYL1).